Here is a 310-residue protein sequence, read N- to C-terminus: Olfactory receptor 8G3 (310 aa).

Residues M1–L25 are Extracellular-facing. Residue N5 is glycosylated (N-linked (GlcNAc...) asparagine). A helical transmembrane segment spans residues R26 to I46. The Cytoplasmic segment spans residues T47 to H54. Residues L55–T75 form a helical membrane-spanning segment. The Extracellular segment spans residues V76–A99. A disulfide bond links C97 and C189. A helical membrane pass occupies residues Q100 to Y120. Residues D121–H139 are Cytoplasmic-facing. The helical transmembrane segment at H140–T160 threads the bilayer. Over S161–L197 the chain is Extracellular. A helical membrane pass occupies residues L198–S217. The Cytoplasmic segment spans residues Y218–A237. Residues F238–M258 traverse the membrane as a helical segment. The Extracellular segment spans residues Y259–R271. The chain crosses the membrane as a helical span at residues K272 to L292. The Cytoplasmic portion of the chain corresponds to R293–C310.

It belongs to the G-protein coupled receptor 1 family.

Its subcellular location is the cell membrane. Odorant receptor. This Homo sapiens (Human) protein is Olfactory receptor 8G3.